Here is a 219-residue protein sequence, read N- to C-terminus: Orotate phosphoribosyltransferase (219 aa).

Lys-26 contacts 5-phospho-alpha-D-ribose 1-diphosphate. An orotate-binding site is contributed by Phe-34–Phe-35. 5-phospho-alpha-D-ribose 1-diphosphate contacts are provided by residues Tyr-72–Lys-73, Arg-98, Lys-99, Lys-102, His-104, and Asp-124–Ala-132. Orotate contacts are provided by Thr-128 and Arg-156.

The protein belongs to the purine/pyrimidine phosphoribosyltransferase family. PyrE subfamily. In terms of assembly, homodimer. Requires Mg(2+) as cofactor.

The catalysed reaction is orotidine 5'-phosphate + diphosphate = orotate + 5-phospho-alpha-D-ribose 1-diphosphate. Its pathway is pyrimidine metabolism; UMP biosynthesis via de novo pathway; UMP from orotate: step 1/2. Catalyzes the transfer of a ribosyl phosphate group from 5-phosphoribose 1-diphosphate to orotate, leading to the formation of orotidine monophosphate (OMP). In Stenotrophomonas maltophilia (strain R551-3), this protein is Orotate phosphoribosyltransferase.